Reading from the N-terminus, the 742-residue chain is uncharacterized protein (742 aa).

Residues 1–102 (MMLLKRSNDN…FTQTKPNNTD (102 aa)) are disordered. The span at 18-28 (NRQNRQNNRQN) shows a compositional bias: low complexity. Basic and acidic residues predominate over residues 48-57 (RDSSRMDPVD). Composition is skewed to polar residues over residues 60-69 (TLISFTSGKP) and 77-99 (HDTGTNKYSSSKLSETFTQTKPN).

This is an uncharacterized protein from Acanthamoeba polyphaga mimivirus (APMV).